A 690-amino-acid polypeptide reads, in one-letter code: Elongation factor G (690 aa).

In terms of domain architecture, tr-type G spans 8-282 (KMTRNIGIMA…AVIDYLPSPL (275 aa)). GTP contacts are provided by residues 17–24 (AHIDAGKT), 81–85 (DTPGH), and 135–138 (NKMD).

The protein belongs to the TRAFAC class translation factor GTPase superfamily. Classic translation factor GTPase family. EF-G/EF-2 subfamily.

Its subcellular location is the cytoplasm. Its function is as follows. Catalyzes the GTP-dependent ribosomal translocation step during translation elongation. During this step, the ribosome changes from the pre-translocational (PRE) to the post-translocational (POST) state as the newly formed A-site-bound peptidyl-tRNA and P-site-bound deacylated tRNA move to the P and E sites, respectively. Catalyzes the coordinated movement of the two tRNA molecules, the mRNA and conformational changes in the ribosome. This is Elongation factor G from Acholeplasma laidlawii (strain PG-8A).